The sequence spans 120 residues: Large ribosomal subunit protein P3y (120 aa).

The span at 81–92 shows a compositional bias: gly residues; sequence GGAAAGGGGGGE. The segment at 81-120 is disordered; that stretch reads GGAAAGGGGGGEAAAATKEEEKKKEESEEEEGDFGFDLFG. The segment covering 97–106 has biased composition (basic and acidic residues); that stretch reads TKEEEKKKEE.

This sequence belongs to the eukaryotic ribosomal protein P1/P2 family.

Its function is as follows. Plays an important role in the elongation step of protein synthesis. This Arabidopsis thaliana (Mouse-ear cress) protein is Large ribosomal subunit protein P3y (RPP3B).